A 296-amino-acid chain; its full sequence is SPbeta prophage-derived endonuclease YokF (296 aa).

The N-terminal stretch at 1 to 19 is a signal peptide; that stretch reads MKKVLLGFAAFTLSLSLAA. Cys20 carries the N-palmitoyl cysteine lipid modification. The S-diacylglycerol cysteine moiety is linked to residue Cys20. The disordered stretch occupies residues 20–65; it reads CSSNDSEKVSTEKETPQASTDVEKKTEQKESTKEKTADKSKEKDKK. A compositionally biased stretch (basic and acidic residues) spans 24–65; sequence DSEKVSTEKETPQASTDVEKKTEQKESTKEKTADKSKEKDKK. The TNase-like domain maps to 66-199; it reads ELVDVTLDRA…KSEKLSIWSK (134 aa). Asp79 contacts Ca(2+). Arg93 is a catalytic residue. The Ca(2+) site is built by Asp98 and Thr99. Catalysis depends on residues Glu101 and Arg144. Positions 218-296 are disordered; that stretch reads AVKKATTSKP…RDHDNYACER (79 aa). Residues 219-244 are compositionally biased toward low complexity; the sequence is VKKATTSKPAATQPTTPKASSETSTT. Over residues 284 to 296 the composition is skewed to basic and acidic residues; that stretch reads KMDRDHDNYACER.

Ca(2+) serves as cofactor. Requires Cu(2+) as cofactor. The cofactor is Mn(2+).

It is found in the cell membrane. Its activity is regulated as follows. Inhibited by aurintricalboxylic acid but not by Zn(2+), Mn(2+), Hg(2+), 2-mercaptoethanol and sodium citrate. Neither inhibited nor activated by ATP. In terms of biological role, catalyzes the hydrolysis of supercoiled double and single strand DNA and RNA. Involved in chromosomal DNA degradation and cell death caused by thermal stress. The protein is SPbeta prophage-derived endonuclease YokF (yokF) of Bacillus subtilis (strain 168).